The chain runs to 456 residues: Bifunctional protein GlmU (456 aa).

A pyrophosphorylase region spans residues 1 to 229 (MLNNAMSVVI…LSEVEGVNNR (229 aa)). Residues 11 to 14 (LAAG), Lys-25, Gln-76, 81 to 82 (GT), 103 to 105 (YGD), Gly-140, Glu-154, Asn-169, and Asn-227 each bind UDP-N-acetyl-alpha-D-glucosamine. Asp-105 is a binding site for Mg(2+). Residue Asn-227 coordinates Mg(2+). Residues 230–250 (LQLSRLERVYQSEQAEKLLLA) are linker. Positions 251 to 456 (GVMLRDPARF…EGWRRPVKKK (206 aa)) are N-acetyltransferase. Residues Arg-333 and Lys-351 each coordinate UDP-N-acetyl-alpha-D-glucosamine. The active-site Proton acceptor is the His-363. The UDP-N-acetyl-alpha-D-glucosamine site is built by Tyr-366 and Asn-377. Acetyl-CoA contacts are provided by residues Ala-380, 386-387 (NY), Ser-405, Ala-423, and Arg-440.

In the N-terminal section; belongs to the N-acetylglucosamine-1-phosphate uridyltransferase family. This sequence in the C-terminal section; belongs to the transferase hexapeptide repeat family. Homotrimer. Mg(2+) is required as a cofactor.

The protein localises to the cytoplasm. The enzyme catalyses alpha-D-glucosamine 1-phosphate + acetyl-CoA = N-acetyl-alpha-D-glucosamine 1-phosphate + CoA + H(+). It catalyses the reaction N-acetyl-alpha-D-glucosamine 1-phosphate + UTP + H(+) = UDP-N-acetyl-alpha-D-glucosamine + diphosphate. It functions in the pathway nucleotide-sugar biosynthesis; UDP-N-acetyl-alpha-D-glucosamine biosynthesis; N-acetyl-alpha-D-glucosamine 1-phosphate from alpha-D-glucosamine 6-phosphate (route II): step 2/2. Its pathway is nucleotide-sugar biosynthesis; UDP-N-acetyl-alpha-D-glucosamine biosynthesis; UDP-N-acetyl-alpha-D-glucosamine from N-acetyl-alpha-D-glucosamine 1-phosphate: step 1/1. The protein operates within bacterial outer membrane biogenesis; LPS lipid A biosynthesis. Its function is as follows. Catalyzes the last two sequential reactions in the de novo biosynthetic pathway for UDP-N-acetylglucosamine (UDP-GlcNAc). The C-terminal domain catalyzes the transfer of acetyl group from acetyl coenzyme A to glucosamine-1-phosphate (GlcN-1-P) to produce N-acetylglucosamine-1-phosphate (GlcNAc-1-P), which is converted into UDP-GlcNAc by the transfer of uridine 5-monophosphate (from uridine 5-triphosphate), a reaction catalyzed by the N-terminal domain. The chain is Bifunctional protein GlmU from Escherichia coli O8 (strain IAI1).